The primary structure comprises 933 residues: Valine--tRNA ligase (933 aa).

The segment at 1-24 is disordered; that stretch reads MIERVKTTKLSEASGLPKTYDPVG. The 'HIGH' region motif lies at 57-67; the sequence is PNVTGSLHMGH. The 'KMSKS' region motif lies at 557-561; that stretch reads KMSKS. Lys560 contributes to the ATP binding site. A coiled-coil region spans residues 866 to 932; sequence LIDIASLRSR…RLVKERLMGL (67 aa).

This sequence belongs to the class-I aminoacyl-tRNA synthetase family. ValS type 1 subfamily. As to quaternary structure, monomer.

It is found in the cytoplasm. The catalysed reaction is tRNA(Val) + L-valine + ATP = L-valyl-tRNA(Val) + AMP + diphosphate. Catalyzes the attachment of valine to tRNA(Val). As ValRS can inadvertently accommodate and process structurally similar amino acids such as threonine, to avoid such errors, it has a 'posttransfer' editing activity that hydrolyzes mischarged Thr-tRNA(Val) in a tRNA-dependent manner. The polypeptide is Valine--tRNA ligase (Prochlorococcus marinus (strain NATL2A)).